Here is a 115-residue protein sequence, read N- to C-terminus: Histidine decarboxylase proenzyme (115 aa).

Pyruvic acid (Ser) is present on Ser-83.

As to quaternary structure, the proenzyme is a hexamer of identical pi chains; each pi chain monomer is cleaved to form a small (or beta) chain and a large (or alpha) chain by non-hydrolytic self-catalysis. It depends on pyruvate as a cofactor.

It carries out the reaction L-histidine + H(+) = histamine + CO2. In Lentilactobacillus buchneri (Lactobacillus buchneri), this protein is Histidine decarboxylase proenzyme.